Reading from the N-terminus, the 211-residue chain is Xanthine phosphoribosyltransferase (211 aa).

Residues Leu-31 and Asn-38 each contribute to the xanthine site. Position 138–142 (138–142) interacts with 5-phospho-alpha-D-ribose 1-diphosphate; that stretch reads ANGRT. A xanthine-binding site is contributed by Lys-166.

This sequence belongs to the purine/pyrimidine phosphoribosyltransferase family. Xpt subfamily. As to quaternary structure, homodimer.

It localises to the cytoplasm. The enzyme catalyses XMP + diphosphate = xanthine + 5-phospho-alpha-D-ribose 1-diphosphate. It participates in purine metabolism; XMP biosynthesis via salvage pathway; XMP from xanthine: step 1/1. Functionally, converts the preformed base xanthine, a product of nucleic acid breakdown, to xanthosine 5'-monophosphate (XMP), so it can be reused for RNA or DNA synthesis. This chain is Xanthine phosphoribosyltransferase, found in Chloroflexus aurantiacus (strain ATCC 29364 / DSM 637 / Y-400-fl).